The chain runs to 1081 residues: Carbamoyl phosphate synthase large chain (1081 aa).

The interval 1 to 403 (MPRRNDLNKI…SFQKALRSLE (403 aa)) is carboxyphosphate synthetic domain. Arg129, Arg170, Gly177, Lys209, Leu211, Glu216, Gly242, Val243, His244, Gln286, and Glu300 together coordinate ATP. Residues 133–329 (KEAMARIGVP…IAKFAAKLAV (197 aa)) enclose the ATP-grasp 1 domain. The Mg(2+) site is built by Gln286, Glu300, and Asn302. Positions 286, 300, and 302 each coordinate Mn(2+). An oligomerization domain region spans residues 404–553 (TGRFGFGCDR…STYEPEECEV (150 aa)). The interval 554 to 944 (LPSDKPKVMI…AFAKAELGAG (391 aa)) is carbamoyl phosphate synthetic domain. The ATP-grasp 2 domain occupies 686–878 (EKILHELEIS…LAKIASLVMS (193 aa)). The ATP site is built by Arg722, Lys761, Leu763, Glu768, Gly794, Ile795, His796, Ser797, Gln837, and Glu849. Mg(2+) contacts are provided by Gln837, Glu849, and Asn851. 3 residues coordinate Mn(2+): Gln837, Glu849, and Asn851. The 137-residue stretch at 945-1081 (VILATTGTVF…DVKALQDYLG (137 aa)) folds into the MGS-like domain. The interval 945-1081 (VILATTGTVF…DVKALQDYLG (137 aa)) is allosteric domain.

It belongs to the CarB family. In terms of assembly, composed of two chains; the small (or glutamine) chain promotes the hydrolysis of glutamine to ammonia, which is used by the large (or ammonia) chain to synthesize carbamoyl phosphate. Tetramer of heterodimers (alpha,beta)4. It depends on Mg(2+) as a cofactor. Requires Mn(2+) as cofactor.

It catalyses the reaction hydrogencarbonate + L-glutamine + 2 ATP + H2O = carbamoyl phosphate + L-glutamate + 2 ADP + phosphate + 2 H(+). The enzyme catalyses hydrogencarbonate + NH4(+) + 2 ATP = carbamoyl phosphate + 2 ADP + phosphate + 2 H(+). It participates in amino-acid biosynthesis; L-arginine biosynthesis; carbamoyl phosphate from bicarbonate: step 1/1. It functions in the pathway pyrimidine metabolism; UMP biosynthesis via de novo pathway; (S)-dihydroorotate from bicarbonate: step 1/3. In terms of biological role, large subunit of the glutamine-dependent carbamoyl phosphate synthetase (CPSase). CPSase catalyzes the formation of carbamoyl phosphate from the ammonia moiety of glutamine, carbonate, and phosphate donated by ATP, constituting the first step of 2 biosynthetic pathways, one leading to arginine and/or urea and the other to pyrimidine nucleotides. The large subunit (synthetase) binds the substrates ammonia (free or transferred from glutamine from the small subunit), hydrogencarbonate and ATP and carries out an ATP-coupled ligase reaction, activating hydrogencarbonate by forming carboxy phosphate which reacts with ammonia to form carbamoyl phosphate. In Synechocystis sp. (strain ATCC 27184 / PCC 6803 / Kazusa), this protein is Carbamoyl phosphate synthase large chain.